The chain runs to 30 residues: Ornithine carbamoyltransferase (30 aa).

This sequence belongs to the aspartate/ornithine carbamoyltransferase superfamily. OTCase family.

Its subcellular location is the cytoplasm. It carries out the reaction carbamoyl phosphate + L-ornithine = L-citrulline + phosphate + H(+). The protein operates within amino-acid biosynthesis; L-arginine biosynthesis; L-arginine from L-ornithine and carbamoyl phosphate: step 1/3. In terms of biological role, has vitronectin and fibronectin-binding activity. In Staphylococcus epidermidis, this protein is Ornithine carbamoyltransferase (argF).